The sequence spans 99 residues: A-type ATP synthase subunit F (99 aa).

The protein belongs to the V-ATPase F subunit family. Has multiple subunits with at least A(3), B(3), C, D, E, F, H, I and proteolipid K(x).

It localises to the cell membrane. Functionally, component of the A-type ATP synthase that produces ATP from ADP in the presence of a proton gradient across the membrane. The polypeptide is A-type ATP synthase subunit F (Methanococcus maripaludis (strain C6 / ATCC BAA-1332)).